The following is a 20-amino-acid chain: Equinatoxin-3 (20 aa).

Positions 3 to 12 are plays an important role in the hemolytic activity; the sequence is AVAGAIIKGA. An N-terminal region region spans residues 11-20; that stretch reads GAALTFNVLQ.

Belongs to the actinoporin family. Sea anemone subfamily. As to quaternary structure, octamer or nonamer in membranes. Monomer in the soluble state.

The protein localises to the secreted. Its subcellular location is the nematocyst. It localises to the target cell membrane. Pore-forming protein that forms cations-selective hydrophilic pores of around 1 nm and causes cardiac stimulation and cytolysis. Pore formation is a multi-step process that involves specific recognition of membrane sphingomyelin (but neither cholesterol nor phosphatidylcholine) using aromatic rich region and adjacent phosphocholine (POC) binding site, firm binding to the membrane (mainly driven by hydrophobic interactions) accompanied by the transfer of the N-terminal region to the lipid-water interface and finally pore formation after oligomerization of monomers. Cytolytic effects include red blood cells hemolysis, platelet aggregation and lysis, cytotoxic and cytostatic effects on fibroblasts. Lethality in mammals has been ascribed to severe vasospasm of coronary vessels, cardiac arrhythmia, and inotropic effects. This is Equinatoxin-3 from Actinia equina (Beadlet anemone).